A 671-amino-acid polypeptide reads, in one-letter code: UvrABC system protein C (671 aa).

The GIY-YIG domain maps to Val-16–Val-95. Residues Asp-208–Ala-243 enclose the UVR domain. The tract at residues Ser-645–Thr-671 is disordered.

The protein belongs to the UvrC family. In terms of assembly, interacts with UvrB in an incision complex.

Its subcellular location is the cytoplasm. In terms of biological role, the UvrABC repair system catalyzes the recognition and processing of DNA lesions. UvrC both incises the 5' and 3' sides of the lesion. The N-terminal half is responsible for the 3' incision and the C-terminal half is responsible for the 5' incision. This chain is UvrABC system protein C, found in Mycobacteroides abscessus (strain ATCC 19977 / DSM 44196 / CCUG 20993 / CIP 104536 / JCM 13569 / NCTC 13031 / TMC 1543 / L948) (Mycobacterium abscessus).